Here is a 293-residue protein sequence, read N- to C-terminus: Glycine N-methyltransferase (293 aa).

Val2 bears the N-acetylvaline mark. (6S)-5-methyl-5,6,7,8-tetrahydrofolate contacts are provided by Ser4 and Tyr6. Ser10 is subject to Phosphoserine. Tyr22, Trp31, Tyr34, and Arg41 together coordinate S-adenosyl-L-methionine. Position 34 is a phosphotyrosine (Tyr34). An N6-succinyllysine modification is found at Lys46. S-adenosyl-L-methionine is bound by residues Ala65, 86 to 88 (DAS), 117 to 118 (NW), 137 to 140 (LGNS), and Arg176. N6-succinyllysine is present on residues Lys191, Lys196, and Lys201. (6S)-5-methyl-5,6,7,8-tetrahydrofolate is bound at residue His215. Tyr221 contacts S-adenosyl-L-methionine. A (6S)-5-methyl-5,6,7,8-tetrahydrofolate-binding site is contributed by Arg240.

Belongs to the class I-like SAM-binding methyltransferase superfamily. Glycine N-methyltransferase family. As to quaternary structure, homotetramer. In terms of tissue distribution, abundant in liver.

It localises to the cytoplasm. The catalysed reaction is glycine + S-adenosyl-L-methionine = sarcosine + S-adenosyl-L-homocysteine + H(+). Inhibited by 5-methyltetrahydrofolate monoglutamate and by 5-methyltetrahydrofolate pentaglutamate, inhibition is much more effective by the pentaglutamate form than by the monoglutamate form. Two molecules of 5-methyltetrahydrofolate are bound per tetramer. The binding sites are localized between subunits. Inhibitor binding may preclude movements of the polypeptide chain that are necessary for enzyme activity. Functionally, catalyzes the methylation of glycine by using S-adenosylmethionine (AdoMet) to form N-methylglycine (sarcosine) with the concomitant production of S-adenosylhomocysteine (AdoHcy), a reaction regulated by the binding of 5-methyltetrahydrofolate. Possible crucial role in the regulation of tissue concentration of AdoMet and of metabolism of methionine. The sequence is that of Glycine N-methyltransferase (Gnmt) from Rattus norvegicus (Rat).